The following is a 304-amino-acid chain: 4-diphosphocytidyl-2-C-methyl-D-erythritol kinase (304 aa).

Residue Lys-18 is part of the active site. Residue Pro-103–Ala-113 participates in ATP binding. Residue Asp-145 is part of the active site.

The protein belongs to the GHMP kinase family. IspE subfamily.

The catalysed reaction is 4-CDP-2-C-methyl-D-erythritol + ATP = 4-CDP-2-C-methyl-D-erythritol 2-phosphate + ADP + H(+). It functions in the pathway isoprenoid biosynthesis; isopentenyl diphosphate biosynthesis via DXP pathway; isopentenyl diphosphate from 1-deoxy-D-xylulose 5-phosphate: step 3/6. Catalyzes the phosphorylation of the position 2 hydroxy group of 4-diphosphocytidyl-2C-methyl-D-erythritol. This Rhodospirillum rubrum (strain ATCC 11170 / ATH 1.1.1 / DSM 467 / LMG 4362 / NCIMB 8255 / S1) protein is 4-diphosphocytidyl-2-C-methyl-D-erythritol kinase.